The following is a 76-amino-acid chain: Candidate secreted effector protein MPL124497 (76 aa).

The signal sequence occupies residues 1 to 21 (MKLIIFAAISVAFMSFDQVLG).

This sequence belongs to the CPGH1 family.

It is found in the secreted. The protein localises to the host cell. The protein resides in the host cytoplasm. It localises to the host nucleus. Functionally, rust effector delivered into infected tissues to modulate host functions and contribute to pathogen virulence. Enhances leaf colonization by the bacteria Pseudomonas syringae and the oomycete Hyaloperonospora arabidopsidis pathogens in an Arabidopsis thaliana infection model. In Melampsora larici-populina (strain 98AG31 / pathotype 3-4-7) (Poplar leaf rust fungus), this protein is Candidate secreted effector protein MPL124497.